The sequence spans 333 residues: Nucleoid-associated protein YE1421 (333 aa).

This sequence belongs to the YejK family.

It is found in the cytoplasm. The protein localises to the nucleoid. The polypeptide is Nucleoid-associated protein YE1421 (Yersinia enterocolitica serotype O:8 / biotype 1B (strain NCTC 13174 / 8081)).